The primary structure comprises 376 residues: ATP phosphoribosyltransferase regulatory subunit (376 aa).

This sequence belongs to the class-II aminoacyl-tRNA synthetase family. HisZ subfamily. As to quaternary structure, heteromultimer composed of HisG and HisZ subunits.

The protein localises to the cytoplasm. It participates in amino-acid biosynthesis; L-histidine biosynthesis; L-histidine from 5-phospho-alpha-D-ribose 1-diphosphate: step 1/9. Its function is as follows. Required for the first step of histidine biosynthesis. May allow the feedback regulation of ATP phosphoribosyltransferase activity by histidine. The sequence is that of ATP phosphoribosyltransferase regulatory subunit from Brucella anthropi (strain ATCC 49188 / DSM 6882 / CCUG 24695 / JCM 21032 / LMG 3331 / NBRC 15819 / NCTC 12168 / Alc 37) (Ochrobactrum anthropi).